We begin with the raw amino-acid sequence, 650 residues long: MDEFREASSVSSSPSTPLRTPLHSPNLFNGDFSVSNRFSFKSSSDYSLSSSFSNGLCSPEDSSSPFSSPPFNGIIPKHNHTSSSPVSFDSLFFKDHEKSHVNGTDDLGLCEDLYRMNIKEDVEEDQIRYARTETLKDPLPKSDHTDFTPDPLYNFSPKHYEPSNGGFVSGGFPYGFFRPPKESSINQSCASWSGFDQSKNDDKRNMFGNNPQQFGWPSYSSSNSGTSPYNNGQEIFENRGGMREYSAYSPPHQPEVSYKHQNYRTTTSDILPLFCQRTQVPMVSKCSEPFSSDESFFMNGKSIDHQRSNTRALMSNNGNPTEICHPSLPNMCDIQGYVYLMAKDQHGCRFLQRIFDEGTSVDAMIIFNEVIAHVVELMMDPFGNYLMQKLLDVCTEEQRTQIVLVATEEPGQLIRISLNAYGTRVVQRLVETIRSGKQISLVKLALRPGFLDLIKDLNGNHVIQRCLQCLSTEDNKFIFDAATKFCTEIATHRHGCCVLQKCIAYSMRQQREKLIAEISRNSLLLAQDPFGNYAVQFVIELRIPSAVAMMLAQLKGHYVQLSMQKFSSHMVERCLMHCPESRPQIVRELVSVPHFDQLLQDPYANFVIQAALAATKGPLHASLVEVIRPHSILRNNPYCKRIFSRNLLKK.

Disordered regions lie at residues Met1–Leu22 and Asn200–Ile235. A chloroplast-targeting transit peptide spans Met1 to Lys77. Low complexity-rich tracts occupy residues Ser8–Leu22 and Pro217–Gly232. The PUM-HD domain occupies Ser308 to Lys650. Pumilio repeat units follow at residues Asp333–Asn368, Glu369–Leu404, Glu408–Lys443, Ala445–Asp480, Ala481–Ala516, Glu517–Ala552, Gln553–Ser591, and His594–Glu625.

The protein localises to the plastid. The protein resides in the chloroplast. It is found in the cytoplasm. In terms of biological role, sequence-specific RNA-binding protein that regulates translation and mRNA stability by binding the 3'-UTR of target mRNAs. This Arabidopsis thaliana (Mouse-ear cress) protein is Putative pumilio homolog 7, chloroplastic (APUM7).